A 482-amino-acid chain; its full sequence is G patch domain-containing protein 2-like (482 aa).

Residues Ser-31, Ser-86, and Ser-88 each carry the phosphoserine modification. Thr-91 carries the phosphothreonine modification. Disordered regions lie at residues 195 to 222 (SQPG…SECD) and 408 to 482 (KRKR…TNGC). Residues 198-215 (GRKERMECEAEEQKHGSD) show a composition bias toward basic and acidic residues. Over residues 414 to 427 (VASASFSSPSPVHP) the composition is skewed to low complexity. Residues 468 to 482 (EKNSGCSSSPGTNGC) are compositionally biased toward polar residues.

This is G patch domain-containing protein 2-like (Gpatch2l) from Mus musculus (Mouse).